A 181-amino-acid chain; its full sequence is Adenylate kinase (181 aa).

10–15 (GAGKGT) lines the ATP pocket. The tract at residues 30–59 (STGELFRKNIQDGTKLGIEAKRYLDAGDLV) is NMP. AMP is bound by residues Thr31, Arg36, 57–59 (DLV), 85–88 (GYPR), and Gln92. Positions 126 to 132 (GRGRADD) are LID. Position 127 (Arg127) interacts with ATP. 2 residues coordinate AMP: Arg129 and Arg140. Gly166 contributes to the ATP binding site.

Belongs to the adenylate kinase family. Monomer.

It localises to the cytoplasm. It carries out the reaction AMP + ATP = 2 ADP. It functions in the pathway purine metabolism; AMP biosynthesis via salvage pathway; AMP from ADP: step 1/1. Functionally, catalyzes the reversible transfer of the terminal phosphate group between ATP and AMP. Plays an important role in cellular energy homeostasis and in adenine nucleotide metabolism. This Mycobacterium marinum (strain ATCC BAA-535 / M) protein is Adenylate kinase.